The following is a 124-amino-acid chain: Max-like protein 1 (124 aa).

Residues 1-10 (MSDMSDLEDD) are compositionally biased toward acidic residues. The segment at 1 to 44 (MSDMSDLEDDQTGHCGSGEHSGPFDPKRHAREQHNALERRRRDN) is disordered. The segment at 29 to 42 (HAREQHNALERRRR) is basic motif. Residues 29 to 82 (HAREQHNALERRRRDNIKDMYTSLREVVPDANGERVQASRAVILKKAIESIEKG) enclose the bHLH domain. The segment covering 32–44 (EQHNALERRRRDN) has biased composition (basic and acidic residues). Positions 43-82 (DNIKDMYTSLREVVPDANGERVQASRAVILKKAIESIEKG) are helix-loop-helix motif. The stretch at 86-113 (SATLSVDVAEQESKNAKLREEIARLKAK) forms a coiled coil.

It belongs to the MAX family. Heterodimer with mdl-1 in presence and absence of DNA. Interacts with tdpt-1; the interaction promotes axon regeneration after injury. Expressed in D-type motor neurons.

The protein resides in the nucleus. Functionally, transcriptional regulator which binds to the E box motif 5'-CACGTG-3', when in a heterodimeric complex with mdl-1. Involved in the control of lifespan in response to dietary restriction, the decline in protein homeostasis associated with normal aging and may overlap with the insulin-like signaling pathway. Involved in promoting infection by the microsporidian pathogen N.parisii. Required for the expression of svh-2 and the promotion of axon regeneration after injury. The sequence is that of Max-like protein 1 from Caenorhabditis elegans.